Reading from the N-terminus, the 175-residue chain is Shikimate kinase (175 aa).

14–19 is a binding site for ATP; the sequence is GAGKST. Residue Ser18 participates in Mg(2+) binding. Substrate-binding residues include Asp36, Arg60, and Gly82. Position 120 (Arg120) interacts with ATP. Arg140 lines the substrate pocket. ATP is bound at residue Gln157.

The protein belongs to the shikimate kinase family. In terms of assembly, monomer. Mg(2+) serves as cofactor.

The protein resides in the cytoplasm. It catalyses the reaction shikimate + ATP = 3-phosphoshikimate + ADP + H(+). The protein operates within metabolic intermediate biosynthesis; chorismate biosynthesis; chorismate from D-erythrose 4-phosphate and phosphoenolpyruvate: step 5/7. In terms of biological role, catalyzes the specific phosphorylation of the 3-hydroxyl group of shikimic acid using ATP as a cosubstrate. In Actinobacillus succinogenes (strain ATCC 55618 / DSM 22257 / CCUG 43843 / 130Z), this protein is Shikimate kinase.